Reading from the N-terminus, the 146-residue chain is Sperm surface protein Sp17 (146 aa).

The span at 76 to 88 (EHESEKCEAEEKS) shows a compositional bias: basic and acidic residues. Residues 76 to 109 (EHESEKCEAEEKSQSVTEEETPVLTIDSEDDKDK) form a disordered region. Positions 92–108 (TEEETPVLTIDSEDDKD) are enriched in acidic residues. Residues 110–139 (EEMAALKIQAAFRGHLAREDVKKIRTNKAE) form the IQ domain.

As to quaternary structure, homodimer. May interact with ROPN1. The N-terminus is blocked. Testis- and sperm-specific.

The protein resides in the membrane. In terms of biological role, sperm surface zona pellucida binding protein. Helps to bind spermatozoa to the zona pellucida with high affinity. Might function in binding zona pellucida and carbohydrates. In Oryctolagus cuniculus (Rabbit), this protein is Sperm surface protein Sp17 (SPA17).